The primary structure comprises 224 residues: Deoxyribose-phosphate aldolase (224 aa).

The Proton donor/acceptor role is filled by aspartate 91. Lysine 152 acts as the Schiff-base intermediate with acetaldehyde in catalysis. The active-site Proton donor/acceptor is lysine 181.

It belongs to the DeoC/FbaB aldolase family. DeoC type 1 subfamily.

It localises to the cytoplasm. It carries out the reaction 2-deoxy-D-ribose 5-phosphate = D-glyceraldehyde 3-phosphate + acetaldehyde. It participates in carbohydrate degradation; 2-deoxy-D-ribose 1-phosphate degradation; D-glyceraldehyde 3-phosphate and acetaldehyde from 2-deoxy-alpha-D-ribose 1-phosphate: step 2/2. Catalyzes a reversible aldol reaction between acetaldehyde and D-glyceraldehyde 3-phosphate to generate 2-deoxy-D-ribose 5-phosphate. This is Deoxyribose-phosphate aldolase from Mycoplasma pneumoniae (strain ATCC 29342 / M129 / Subtype 1) (Mycoplasmoides pneumoniae).